The following is a 281-amino-acid chain: Elongation factor Ts (281 aa).

An involved in Mg(2+) ion dislocation from EF-Tu region spans residues 80 to 83; sequence TDFV.

It belongs to the EF-Ts family.

It is found in the cytoplasm. Its function is as follows. Associates with the EF-Tu.GDP complex and induces the exchange of GDP to GTP. It remains bound to the aminoacyl-tRNA.EF-Tu.GTP complex up to the GTP hydrolysis stage on the ribosome. This is Elongation factor Ts from Aliivibrio fischeri (strain MJ11) (Vibrio fischeri).